We begin with the raw amino-acid sequence, 618 residues long: UvrABC system protein C (618 aa).

Residues 13–92 form the GIY-YIG domain; that stretch reads DKPGVYLMKN…IKKYRPKYNI (80 aa). Residues 204–239 enclose the UVR domain; it reads LDIVENFKLNMEKAAENLEFEKAAMLRDKINIIEKI.

This sequence belongs to the UvrC family. As to quaternary structure, interacts with UvrB in an incision complex.

Its subcellular location is the cytoplasm. Functionally, the UvrABC repair system catalyzes the recognition and processing of DNA lesions. UvrC both incises the 5' and 3' sides of the lesion. The N-terminal half is responsible for the 3' incision and the C-terminal half is responsible for the 5' incision. The sequence is that of UvrABC system protein C from Clostridium botulinum (strain Loch Maree / Type A3).